We begin with the raw amino-acid sequence, 299 residues long: NAD kinase (299 aa).

The Proton acceptor role is filled by Asp64. Residues 64-65 (DG), 138-139 (ND), Arg149, Arg166, Asp168, 179-184 (TGYAVS), and Gln238 contribute to the NAD(+) site.

The protein belongs to the NAD kinase family. It depends on a divalent metal cation as a cofactor.

The protein resides in the cytoplasm. The catalysed reaction is NAD(+) + ATP = ADP + NADP(+) + H(+). Involved in the regulation of the intracellular balance of NAD and NADP, and is a key enzyme in the biosynthesis of NADP. Catalyzes specifically the phosphorylation on 2'-hydroxyl of the adenosine moiety of NAD to yield NADP. The sequence is that of NAD kinase from Nitratidesulfovibrio vulgaris (strain ATCC 29579 / DSM 644 / CCUG 34227 / NCIMB 8303 / VKM B-1760 / Hildenborough) (Desulfovibrio vulgaris).